We begin with the raw amino-acid sequence, 408 residues long: Phosphoglycerate kinase (408 aa).

Substrate-binding positions include 24–26 (DIN), Arg-40, 63–66 (HQGR), Arg-120, and Arg-160. ATP is bound by residues Glu-331 and 357–360 (GGHM).

The protein belongs to the phosphoglycerate kinase family.

Its subcellular location is the cytoplasm. The enzyme catalyses (2R)-3-phosphoglycerate + ATP = (2R)-3-phospho-glyceroyl phosphate + ADP. It participates in carbohydrate degradation; glycolysis; pyruvate from D-glyceraldehyde 3-phosphate: step 2/5. This Saccharolobus solfataricus (strain ATCC 35092 / DSM 1617 / JCM 11322 / P2) (Sulfolobus solfataricus) protein is Phosphoglycerate kinase (pgk).